The sequence spans 215 residues: Cytochrome b6 (215 aa).

A helical membrane pass occupies residues 32 to 52 (IFYCLGGITLTCFLVQVATGF). C35 serves as a coordination point for heme c. Residues H86 and H100 each contribute to the heme b site. 3 helical membrane-spanning segments follow: residues 90 to 110 (ASMMVLMMILHVFRVYLTGGF), 116 to 136 (LTWVTGVVLAVLTASFGVTGY), and 186 to 206 (LHTFVLPLLTAVFMLMHFLMI). H187 and H202 together coordinate heme b.

Belongs to the cytochrome b family. PetB subfamily. In terms of assembly, the 4 large subunits of the cytochrome b6-f complex are cytochrome b6, subunit IV (17 kDa polypeptide, PetD), cytochrome f and the Rieske protein, while the 4 small subunits are PetG, PetL, PetM and PetN. The complex functions as a dimer. The cofactor is heme b. Requires heme c as cofactor.

Its subcellular location is the plastid. The protein localises to the chloroplast thylakoid membrane. Component of the cytochrome b6-f complex, which mediates electron transfer between photosystem II (PSII) and photosystem I (PSI), cyclic electron flow around PSI, and state transitions. The sequence is that of Cytochrome b6 from Nicotiana tabacum (Common tobacco).